A 428-amino-acid polypeptide reads, in one-letter code: Enolase (428 aa).

Position 162 (Q162) interacts with (2R)-2-phosphoglycerate. E204 (proton donor) is an active-site residue. Residues D241, E283, and D310 each coordinate Mg(2+). 4 residues coordinate (2R)-2-phosphoglycerate: K335, R364, S365, and K386. K335 acts as the Proton acceptor in catalysis.

Belongs to the enolase family. The cofactor is Mg(2+).

It localises to the cytoplasm. It is found in the secreted. The protein resides in the cell surface. It carries out the reaction (2R)-2-phosphoglycerate = phosphoenolpyruvate + H2O. The protein operates within carbohydrate degradation; glycolysis; pyruvate from D-glyceraldehyde 3-phosphate: step 4/5. Catalyzes the reversible conversion of 2-phosphoglycerate (2-PG) into phosphoenolpyruvate (PEP). It is essential for the degradation of carbohydrates via glycolysis. This is Enolase from Rhodococcus opacus (strain B4).